A 357-amino-acid polypeptide reads, in one-letter code: tRNA N6-adenosine threonylcarbamoyltransferase (357 aa).

2 residues coordinate Fe cation: histidine 115 and histidine 119. Substrate contacts are provided by residues 137 to 141, aspartate 170, glycine 183, and asparagine 281; that span reads LASGG. A Fe cation-binding site is contributed by aspartate 309.

This sequence belongs to the KAE1 / TsaD family. Fe(2+) is required as a cofactor.

It localises to the cytoplasm. The catalysed reaction is L-threonylcarbamoyladenylate + adenosine(37) in tRNA = N(6)-L-threonylcarbamoyladenosine(37) in tRNA + AMP + H(+). In terms of biological role, required for the formation of a threonylcarbamoyl group on adenosine at position 37 (t(6)A37) in tRNAs that read codons beginning with adenine. Is involved in the transfer of the threonylcarbamoyl moiety of threonylcarbamoyl-AMP (TC-AMP) to the N6 group of A37, together with TsaE and TsaB. TsaD likely plays a direct catalytic role in this reaction. The polypeptide is tRNA N6-adenosine threonylcarbamoyltransferase (Afipia carboxidovorans (strain ATCC 49405 / DSM 1227 / KCTC 32145 / OM5) (Oligotropha carboxidovorans)).